Consider the following 281-residue polypeptide: 2-dehydro-3-deoxyphosphooctonate aldolase (281 aa).

It belongs to the KdsA family.

It is found in the cytoplasm. The enzyme catalyses D-arabinose 5-phosphate + phosphoenolpyruvate + H2O = 3-deoxy-alpha-D-manno-2-octulosonate-8-phosphate + phosphate. Its pathway is carbohydrate biosynthesis; 3-deoxy-D-manno-octulosonate biosynthesis; 3-deoxy-D-manno-octulosonate from D-ribulose 5-phosphate: step 2/3. The protein operates within bacterial outer membrane biogenesis; lipopolysaccharide biosynthesis. This is 2-dehydro-3-deoxyphosphooctonate aldolase from Pseudomonas paraeruginosa (strain DSM 24068 / PA7) (Pseudomonas aeruginosa (strain PA7)).